An 85-amino-acid polypeptide reads, in one-letter code: MVKLFVIVILALIAVAFGQHGHGGQDQHGYGHGQQAVYGKGHEGHGVNNLGQDGHGQHGYAHGHSDQHGHGGQHGQHDGYKNRGY.

Residues methionine 1 to glycine 18 form the signal peptide. 2 consecutive repeat copies span residues glutamine 19–glutamine 25 and glutamine 67–glutamine 73. Positions glutamine 19–glutamine 73 are 2 X 7 AA repeats of Q-H-G-H-G-G-Q. Residues histidine 22–histidine 32 show a composition bias toward gly residues. A disordered region spans residues histidine 22–tyrosine 85. A compositionally biased stretch (basic and acidic residues) spans glycine 63–tyrosine 85.

As to quaternary structure, homodimer. In terms of processing, the N-terminus is blocked. In terms of tissue distribution, hemolymph.

Its function is as follows. This protein inhibits the growth of a variety of fungal species. The antifungal activity of this protein is enhanced by the presence of sarcotoxin IA. The polypeptide is Antifungal protein (Sarcophaga peregrina (Flesh fly)).